A 622-amino-acid polypeptide reads, in one-letter code: Cilia- and flagella-associated protein 206 (622 aa).

Residues 570–592 form a disordered region; that stretch reads SQVYPPKDTSTQSMREDSTGVPR.

It belongs to the CFAP206 family.

Its subcellular location is the cytoplasm. It localises to the cytoskeleton. The protein localises to the cilium axoneme. It is found in the cilium basal body. In terms of biological role, essential for sperm motility and is involved in the regulation of the beating frequency of motile cilia on the epithelial cells of the respiratory tract. Required for the establishment of radial spokes in sperm flagella. The polypeptide is Cilia- and flagella-associated protein 206 (Homo sapiens (Human)).